A 1134-amino-acid chain; its full sequence is Spermatogenesis-associated protein 31C2 (1134 aa).

A helical membrane pass occupies residues 23 to 43 (PWVLDIFLTLVFALGFFFLLL). 7 disordered regions span residues 54–87 (PPSP…NHSL), 115–243 (LEKG…LLTP), 477–504 (PGTS…EAQT), 524–561 (TPQN…DSGS), 727–807 (MPER…PTVP), 928–1007 (NMGH…PSIS), and 1111–1134 (AASS…IRDQ). Positions 59-87 (PKKRKRHLVSQRPAGRRGRPRGRMKNHSL) are enriched in basic residues. Residues 132 to 148 (VGKRTPDGASRSSHEPT) are compositionally biased toward basic and acidic residues. Low complexity predominate over residues 185-201 (SSLSASQPPEPSLLLEH). Pro residues predominate over residues 204–235 (PEPPALFPHPPRTPDPLACSPPPPKGFTPPPL). The segment covering 489-504 (WQSSTSTGESSKEAQT) has biased composition (polar residues). Composition is skewed to polar residues over residues 773 to 794 (LTYS…SSRA) and 937 to 948 (PNCQGSCKSQSP). Over residues 954 to 970 (HKRENSRKPNLEKHEEM) the composition is skewed to basic and acidic residues. The segment covering 1111–1124 (AASSQQATLKNQSR) has biased composition (polar residues). The span at 1125–1134 (PNRDRQIRDQ) shows a compositional bias: basic and acidic residues.

Belongs to the SPATA31 family.

Its subcellular location is the membrane. May play a role in spermatogenesis. The protein is Spermatogenesis-associated protein 31C2 (SPATA31C2) of Homo sapiens (Human).